Reading from the N-terminus, the 227-residue chain is uncharacterized protein (227 aa).

The first 23 residues, 1–23 (MKKLTVTFLTFISIFFAATAAFA), serve as a signal peptide directing secretion.

This is an uncharacterized protein from Coxiella burnetii (strain RSA 493 / Nine Mile phase I).